A 276-amino-acid chain; its full sequence is Omega-amidase NIT2-A (276 aa).

A CN hydrolase domain is found at 4–248 (FKLSLVQFLV…ETVLSAEIDL (245 aa)). Glu43 acts as the Proton acceptor in catalysis. Lys112 serves as the catalytic Proton donor. Cys153 serves as the catalytic Nucleophile.

It belongs to the carbon-nitrogen hydrolase superfamily. NIT1/NIT2 family. As to quaternary structure, homodimer.

The protein resides in the cytoplasm. The catalysed reaction is 2-oxoglutaramate + H2O = 2-oxoglutarate + NH4(+). The enzyme catalyses 2-oxosuccinamate + H2O = oxaloacetate + NH4(+). In terms of biological role, has omega-amidase activity. The role of omega-amidase is to remove potentially toxic intermediates by converting 2-oxoglutaramate and 2-oxosuccinamate to biologically useful 2-oxoglutarate and oxaloacetate, respectively. The chain is Omega-amidase NIT2-A (nit2a) from Xenopus laevis (African clawed frog).